We begin with the raw amino-acid sequence, 119 residues long: Large ribosomal subunit protein bL20c (119 aa).

It belongs to the bacterial ribosomal protein bL20 family.

It localises to the plastid. It is found in the chloroplast. Binds directly to 23S ribosomal RNA and is necessary for the in vitro assembly process of the 50S ribosomal subunit. It is not involved in the protein synthesizing functions of that subunit. The protein is Large ribosomal subunit protein bL20c of Saccharum hybrid (Sugarcane).